Reading from the N-terminus, the 270-residue chain is tRNA pseudouridine synthase A (270 aa).

The active-site Nucleophile is Asp60. Residues 107–111 (FHARF) are RNA binding. Tyr118 contributes to the substrate binding site. Positions 168–172 (QCQSR) are interaction with tRNA.

The protein belongs to the tRNA pseudouridine synthase TruA family. As to quaternary structure, homodimer.

It carries out the reaction uridine(38/39/40) in tRNA = pseudouridine(38/39/40) in tRNA. Formation of pseudouridine at positions 38, 39 and 40 in the anticodon stem and loop of transfer RNAs. The polypeptide is tRNA pseudouridine synthase A (Shigella sonnei (strain Ss046)).